Here is a 432-residue protein sequence, read N- to C-terminus: MSHHSQIQKIQAREIMDSRGNPTVEVDVILLDGSFGRAAVPSGASTGEYEAVELRDGDKHRYLGKGVLKAVEHVNLKIQEVLKGENAIDQNRIDQLMLDADGTKNKGKLGANAILGTSLAVAKAAAAHSKLPLYRYIGGNFARELPVPMMNIINGGAHADNNVDFQEFMILPVGAKSFREALRMGAEIFHSLKSVLKGKKLNTAVGDEGGFAPDLTSNVEAIEVILQAIEKAGYKPEKDVLLGLDAASSEFYDKSKKKYVLGAENNKEFSSAELVDYYANLVSKYPIITIEDGLDENDWDGWKLLSEKLGKKIQLVGDDLFVTNIEKLSKGISSGVGNSILIKVNQIGSLSETLSSIEMAKKAKYTNVVSHRSGETEDVTISHIAVATNAGQIKTGSLSRTDRIAKYNELLRIEEELGKSAVYKGRETFYNL.

Position 166 (Q166) interacts with (2R)-2-phosphoglycerate. E208 (proton donor) is an active-site residue. Residues D245, E291, and D318 each coordinate Mg(2+). (2R)-2-phosphoglycerate is bound by residues K343, R372, S373, and K394. K343 (proton acceptor) is an active-site residue.

This sequence belongs to the enolase family. It depends on Mg(2+) as a cofactor.

Its subcellular location is the cytoplasm. The protein localises to the secreted. It is found in the cell surface. The catalysed reaction is (2R)-2-phosphoglycerate = phosphoenolpyruvate + H2O. It participates in carbohydrate degradation; glycolysis; pyruvate from D-glyceraldehyde 3-phosphate: step 4/5. Its function is as follows. Catalyzes the reversible conversion of 2-phosphoglycerate (2-PG) into phosphoenolpyruvate (PEP). It is essential for the degradation of carbohydrates via glycolysis. This Leptospira interrogans serogroup Icterohaemorrhagiae serovar copenhageni (strain Fiocruz L1-130) protein is Enolase.